Here is a 469-residue protein sequence, read N- to C-terminus: UDP-N-acetylmuramate--L-alanine ligase (469 aa).

Gly113–Thr119 is an ATP binding site.

The protein belongs to the MurCDEF family.

It localises to the cytoplasm. It carries out the reaction UDP-N-acetyl-alpha-D-muramate + L-alanine + ATP = UDP-N-acetyl-alpha-D-muramoyl-L-alanine + ADP + phosphate + H(+). Its pathway is cell wall biogenesis; peptidoglycan biosynthesis. In terms of biological role, cell wall formation. The polypeptide is UDP-N-acetylmuramate--L-alanine ligase (Syntrophobacter fumaroxidans (strain DSM 10017 / MPOB)).